Consider the following 178-residue polypeptide: Inorganic pyrophosphatase (178 aa).

Residues Lys31, Arg45, and Tyr57 each coordinate substrate. The Mg(2+) site is built by Asp67, Asp72, and Asp104. Tyr141 is a binding site for substrate.

The protein belongs to the PPase family. In terms of assembly, homohexamer. The cofactor is Mg(2+).

The protein localises to the cytoplasm. The catalysed reaction is diphosphate + H2O = 2 phosphate + H(+). In terms of biological role, catalyzes the hydrolysis of inorganic pyrophosphate (PPi) forming two phosphate ions. The sequence is that of Inorganic pyrophosphatase from Leptospira interrogans serogroup Icterohaemorrhagiae serovar copenhageni (strain Fiocruz L1-130).